The chain runs to 206 residues: Synaptosomal-associated protein 25 (206 aa).

Residues 1–20 are compositionally biased toward basic and acidic residues; that stretch reads MAEDADMRNELEEMQRRADQ. The tract at residues 1–25 is disordered; sequence MAEDADMRNELEEMQRRADQLADES. The interval 1 to 75 is interaction with CENPF; the sequence is MAEDADMRNE…QINKDMKEAE (75 aa). Residues 19–81 enclose the t-SNARE coiled-coil homology 1 domain; sequence DQLADESLES…KEAEKNSTDL (63 aa). 4 S-palmitoyl cysteine lipidation sites follow: cysteine 85, cysteine 88, cysteine 90, and cysteine 92. The interval 111–120 is interaction with ZDHHC17; the sequence is GVVASQPARV. At threonine 138 the chain carries Phosphothreonine. One can recognise a t-SNARE coiled-coil homology 2 domain in the interval 140–202; sequence DARENEMDEN…DEANQRATKM (63 aa). 2 positions are modified to phosphoserine: serine 154 and serine 187.

It belongs to the SNAP-25 family. Part of the SNARE core complex containing SNAP25, VAMP2 and STX1A; this complex binds CPLX1. Found in a complex containing SYT1, SV2B and syntaxin-1. Found in a ternary complex with STX1A and VAMP8. Interacts with HSC70 and with SYT9, forming a complex with DNAJC5. The interaction with SYT9 is inhibited in presence of calcium. Isoform 1 and isoform 2 interact with BLOC1S6. Interacts with CENPF. Interacts with EQTN. Interacts with HGS. Interacts with KCNB1 (via N-terminus); reduces the voltage-dependent potassium channel KCNB1 activity in pancreatic beta cells. Interacts with OTOF. Interacts with RIMS1. Interacts with SNAPIN. Interacts with STXBP6. Interacts with TRIM9. Interacts with ZDHHC13 (via ANK repeats). Interacts with ZDHHC17 (via ANK repeats). Associates with the BLOC-1 complex. Interacts with PLCL1 (via C2 domain). Interacts with PRRT2; this interaction may impair the formation of the SNARE complex. Interacts with alpha-synuclein/SNCA. Interacts with PRPH2. Interacts with ROM1. Interacts with STX3. Post-translationally, palmitoylated. Cys-85 appears to be the main site, and palmitoylation is required for membrane association.

The protein localises to the cytoplasm. Its subcellular location is the perinuclear region. It is found in the cell membrane. The protein resides in the synapse. It localises to the synaptosome. The protein localises to the photoreceptor inner segment. Functionally, t-SNARE involved in the molecular regulation of neurotransmitter release. May play an important role in the synaptic function of specific neuronal systems. Associates with proteins involved in vesicle docking and membrane fusion. Regulates plasma membrane recycling through its interaction with CENPF. Modulates the gating characteristics of the delayed rectifier voltage-dependent potassium channel KCNB1 in pancreatic beta cells. In Pongo abelii (Sumatran orangutan), this protein is Synaptosomal-associated protein 25 (SNAP25).